Reading from the N-terminus, the 172-residue chain is Small ribosomal subunit protein uS5 (172 aa).

Residues Tyr15–Val78 form the S5 DRBM domain.

The protein belongs to the universal ribosomal protein uS5 family. Part of the 30S ribosomal subunit. Contacts proteins S4 and S8.

Its function is as follows. With S4 and S12 plays an important role in translational accuracy. In terms of biological role, located at the back of the 30S subunit body where it stabilizes the conformation of the head with respect to the body. The chain is Small ribosomal subunit protein uS5 from Ruthia magnifica subsp. Calyptogena magnifica.